The following is a 308-amino-acid chain: Oligopeptide transport system permease protein AmiD (308 aa).

A run of 6 helical transmembrane segments spans residues 43 to 63, 111 to 131, 145 to 167, 171 to 193, 234 to 254, and 274 to 294; these read TVVM…YPMF, ILIS…VGGI, VYNV…SIGA, NLIF…VQIL, MLPS…GLPI, and AYLF…LFVV. Residues 107–295 enclose the ABC transmembrane type-1 domain; it reads ARNSILISVI…LVSLSLFVVG (189 aa).

This sequence belongs to the binding-protein-dependent transport system permease family. OppBC subfamily.

The protein localises to the cell membrane. Functionally, part of the binding-protein-dependent transport system for oligopeptides; probably responsible for the translocation of the substrate across the membrane. This Streptococcus pneumoniae (strain ATCC BAA-255 / R6) protein is Oligopeptide transport system permease protein AmiD (amiD).